The chain runs to 367 residues: Pre-small/secreted glycoprotein (367 aa).

The N-terminal stretch at M1 to S33 is a signal peptide. N41 is a glycosylation site (N-linked (GlcNAc...) asparagine; by host). Disulfide bonds link C109–C136 and C122–C148. N205, N229, N239, N258, and N269 each carry an N-linked (GlcNAc...) asparagine; by host glycan.

It belongs to the filoviruses glycoprotein family. As to quaternary structure, homodimer; disulfide-linked. The homodimers are linked by two disulfide bonds in a parallel orientation. Monomer. This precursor is processed into mature sGP and delta-peptide by host furin or furin-like proteases. The cleavage site corresponds to the furin optimal cleavage sequence [KR]-X-[KR]-R. Post-translationally, N-glycosylated. In terms of processing, O-glycosylated.

It localises to the secreted. Seems to possess an anti-inflammatory activity as it can reverse the barrier-decreasing effects of TNF alpha. Might therefore contribute to the lack of inflammatory reaction seen during infection in spite the of extensive necrosis and massive virus production. Does not seem to be involved in activation of primary macrophages. Does not seem to interact specifically with neutrophils. Its function is as follows. Viroporin that permeabilizes mammalian cell plasma membranes. It acts by altering permeation of ionic compounds and small molecules. This activity may lead to viral enterotoxic activity. The polypeptide is Pre-small/secreted glycoprotein (GP) (Epomops franqueti (Franquet's epauletted fruit bat)).